Consider the following 209-residue polypeptide: Ribonuclease HII (209 aa).

The RNase H type-2 domain occupies 18 to 209; the sequence is GLVAGVDEVG…FKPVKALLER (192 aa). Asp24, Glu25, and Asp116 together coordinate a divalent metal cation.

It belongs to the RNase HII family. Mn(2+) is required as a cofactor. Requires Mg(2+) as cofactor.

The protein resides in the cytoplasm. It catalyses the reaction Endonucleolytic cleavage to 5'-phosphomonoester.. Endonuclease that specifically degrades the RNA of RNA-DNA hybrids. The chain is Ribonuclease HII from Shewanella sp. (strain MR-7).